We begin with the raw amino-acid sequence, 167 residues long: Lipoprotein signal peptidase (167 aa).

3 helical membrane-spanning segments follow: residues Phe8 to Met28, Phe61 to Trp81, and Phe93 to Tyr113. Active-site residues include Asp117 and Asp136. The chain crosses the membrane as a helical span at residues Ile126 to Ile146.

It belongs to the peptidase A8 family.

The protein localises to the cell inner membrane. The catalysed reaction is Release of signal peptides from bacterial membrane prolipoproteins. Hydrolyzes -Xaa-Yaa-Zaa-|-(S,diacylglyceryl)Cys-, in which Xaa is hydrophobic (preferably Leu), and Yaa (Ala or Ser) and Zaa (Gly or Ala) have small, neutral side chains.. It functions in the pathway protein modification; lipoprotein biosynthesis (signal peptide cleavage). This protein specifically catalyzes the removal of signal peptides from prolipoproteins. In Bartonella quintana (strain Toulouse) (Rochalimaea quintana), this protein is Lipoprotein signal peptidase.